The chain runs to 433 residues: UDP-N-acetylglucosamine 1-carboxyvinyltransferase 1 (433 aa).

Residue 22-23 (KN) participates in phosphoenolpyruvate binding. A UDP-N-acetyl-alpha-D-glucosamine-binding site is contributed by Arg95. Cys119 functions as the Proton donor in the catalytic mechanism. Residue Cys119 is modified to 2-(S-cysteinyl)pyruvic acid O-phosphothioketal. UDP-N-acetyl-alpha-D-glucosamine is bound by residues 124–128 (RPVDL), Asp307, and Val329.

The protein belongs to the EPSP synthase family. MurA subfamily.

The protein localises to the cytoplasm. It catalyses the reaction phosphoenolpyruvate + UDP-N-acetyl-alpha-D-glucosamine = UDP-N-acetyl-3-O-(1-carboxyvinyl)-alpha-D-glucosamine + phosphate. It functions in the pathway cell wall biogenesis; peptidoglycan biosynthesis. Its function is as follows. Cell wall formation. Adds enolpyruvyl to UDP-N-acetylglucosamine. The chain is UDP-N-acetylglucosamine 1-carboxyvinyltransferase 1 from Latilactobacillus sakei subsp. sakei (strain 23K) (Lactobacillus sakei subsp. sakei).